The chain runs to 52 residues: ATP synthase F(1) complex subunit epsilon, mitochondrial (52 aa).

N6-acetyllysine; alternate occurs at positions 21, 32, and 37. N6-succinyllysine; alternate is present on residues lysine 21, lysine 32, and lysine 37. An N6-acetyllysine modification is found at lysine 44.

It belongs to the eukaryotic ATPase epsilon family. Component of the ATP synthase complex composed at least of ATP5F1A/subunit alpha, ATP5F1B/subunit beta, ATP5MC1/subunit c (homooctomer), MT-ATP6/subunit a, MT-ATP8/subunit 8, ATP5ME/subunit e, ATP5MF/subunit f, ATP5MG/subunit g, ATP5MK/subunit k, ATP5MJ/subunit j, ATP5F1C/subunit gamma, ATP5F1D/subunit delta, ATP5F1E/subunit epsilon, ATP5PF/subunit F6, ATP5PB/subunit b, ATP5PD/subunit d, ATP5PO/subunit OSCP. ATP synthase complex consists of a soluble F(1) head domain (subunits alpha(3) and beta(3)) - the catalytic core - and a membrane F(0) domain - the membrane proton channel (subunits c, a, 8, e, f, g, k and j). These two domains are linked by a central stalk (subunits gamma, delta, and epsilon) rotating inside the F1 region and a stationary peripheral stalk (subunits F6, b, d, and OSCP).

The protein localises to the mitochondrion. It localises to the mitochondrion inner membrane. Functionally, subunit epsilon, of the mitochondrial membrane ATP synthase complex (F(1)F(0) ATP synthase or Complex V) that produces ATP from ADP in the presence of a proton gradient across the membrane which is generated by electron transport complexes of the respiratory chain. ATP synthase complex consist of a soluble F(1) head domain - the catalytic core - and a membrane F(1) domain - the membrane proton channel. These two domains are linked by a central stalk rotating inside the F(1) region and a stationary peripheral stalk. During catalysis, ATP synthesis in the catalytic domain of F(1) is coupled via a rotary mechanism of the central stalk subunits to proton translocation. In vivo, can only synthesize ATP although its ATP hydrolase activity can be activated artificially in vitro. May be essential for the assembly of F(1) and may play an important role in the incorporation of the hydrophobic subunit c into the F(1)-c oligomer rotor of the mitochondrial ATP synthase complex. The chain is ATP synthase F(1) complex subunit epsilon, mitochondrial from Mus musculus (Mouse).